The primary structure comprises 359 residues: UDP-N-acetylglucosamine--N-acetylmuramyl-(pentapeptide) pyrophosphoryl-undecaprenol N-acetylglucosamine transferase (359 aa).

UDP-N-acetyl-alpha-D-glucosamine-binding positions include 15 to 17, N127, R166, S191, I245, 264 to 269, and Q290; these read TGG and ALTVSE.

The protein belongs to the glycosyltransferase 28 family. MurG subfamily.

It is found in the cell inner membrane. It carries out the reaction di-trans,octa-cis-undecaprenyl diphospho-N-acetyl-alpha-D-muramoyl-L-alanyl-D-glutamyl-meso-2,6-diaminopimeloyl-D-alanyl-D-alanine + UDP-N-acetyl-alpha-D-glucosamine = di-trans,octa-cis-undecaprenyl diphospho-[N-acetyl-alpha-D-glucosaminyl-(1-&gt;4)]-N-acetyl-alpha-D-muramoyl-L-alanyl-D-glutamyl-meso-2,6-diaminopimeloyl-D-alanyl-D-alanine + UDP + H(+). It participates in cell wall biogenesis; peptidoglycan biosynthesis. In terms of biological role, cell wall formation. Catalyzes the transfer of a GlcNAc subunit on undecaprenyl-pyrophosphoryl-MurNAc-pentapeptide (lipid intermediate I) to form undecaprenyl-pyrophosphoryl-MurNAc-(pentapeptide)GlcNAc (lipid intermediate II). This chain is UDP-N-acetylglucosamine--N-acetylmuramyl-(pentapeptide) pyrophosphoryl-undecaprenol N-acetylglucosamine transferase, found in Pseudomonas putida (strain ATCC 700007 / DSM 6899 / JCM 31910 / BCRC 17059 / LMG 24140 / F1).